Reading from the N-terminus, the 241-residue chain is Uracil-DNA glycosylase (241 aa).

The active-site Proton acceptor is the Asp-71.

This sequence belongs to the uracil-DNA glycosylase (UDG) superfamily. UNG family.

It is found in the cytoplasm. It catalyses the reaction Hydrolyzes single-stranded DNA or mismatched double-stranded DNA and polynucleotides, releasing free uracil.. Its function is as follows. Excises uracil residues from the DNA which can arise as a result of misincorporation of dUMP residues by DNA polymerase or due to deamination of cytosine. This chain is Uracil-DNA glycosylase, found in Xanthomonas axonopodis pv. citri (strain 306).